Consider the following 366-residue polypeptide: Septin-1 (366 aa).

The 274-residue stretch at 22–295 (KGFDFTLMVA…EGYRARCLQS (274 aa)) folds into the Septin-type G domain. The G1 motif stretch occupies residues 32 to 39 (GESGLGKS). GTP is bound by residues 32–39 (GESGLGKS), T66, G92, and 171–179 (KADALLPRE). Residues 89–92 (DTPG) are G3 motif. A G4 motif region spans residues 170–173 (GKAD). The residue at position 206 (S206) is a Phosphoserine. Residues G229 and R244 each coordinate GTP. S247 carries the phosphoserine; by AURKB modification. Position 250 is a phosphothreonine (T250). Residues S306 and S314 each carry the phosphoserine; by AURKB modification. Residues 347–366 (EKMQAQMQQSQAQGEQSDVL) form a disordered region. The span at 349-366 (MQAQMQQSQAQGEQSDVL) shows a compositional bias: low complexity.

This sequence belongs to the TRAFAC class TrmE-Era-EngA-EngB-Septin-like GTPase superfamily. Septin GTPase family. Septins polymerize into heterooligomeric protein complexes that form filaments, and can associate with cellular membranes, actin filaments and microtubules. GTPase activity is required for filament formation. Interacts with AURKB.

It is found in the cytoplasm. It localises to the cytoskeleton. The protein localises to the microtubule organizing center. The protein resides in the centrosome. Its subcellular location is the midbody. Its function is as follows. Filament-forming cytoskeletal GTPase. May play a role in cytokinesis (Potential). This Rattus norvegicus (Rat) protein is Septin-1.